Reading from the N-terminus, the 326-residue chain is Vitamin B12 import system permease protein BtuC (326 aa).

Transmembrane regions (helical) follow at residues 15–35 (WLLC…CAGE), 61–81 (LAVL…QALF), 88–108 (PGLL…VLLG), 112–132 (LPNW…TLIL), 146–166 (LLAG…AIYF), 184–204 (GGVD…LLWI), 240–260 (GWMV…GLVI), 274–294 (VLLP…DIVA), and 302–322 (ELPI…WLLL).

This sequence belongs to the binding-protein-dependent transport system permease family. FecCD subfamily. The complex is composed of two ATP-binding proteins (BtuD), two transmembrane proteins (BtuC) and a solute-binding protein (BtuF).

Its subcellular location is the cell inner membrane. Its function is as follows. Part of the ABC transporter complex BtuCDF involved in vitamin B12 import. Involved in the translocation of the substrate across the membrane. This is Vitamin B12 import system permease protein BtuC from Shigella sonnei (strain Ss046).